The sequence spans 142 residues: Large ribosomal subunit protein uL11 (142 aa).

It belongs to the universal ribosomal protein uL11 family. As to quaternary structure, part of the ribosomal stalk of the 50S ribosomal subunit. Interacts with L10 and the large rRNA to form the base of the stalk. L10 forms an elongated spine to which L12 dimers bind in a sequential fashion forming a multimeric L10(L12)X complex. In terms of processing, one or more lysine residues are methylated.

Forms part of the ribosomal stalk which helps the ribosome interact with GTP-bound translation factors. This chain is Large ribosomal subunit protein uL11, found in Hydrogenovibrio crunogenus (strain DSM 25203 / XCL-2) (Thiomicrospira crunogena).